Reading from the N-terminus, the 206-residue chain is Glutathione peroxidase 1 (206 aa).

A Phosphoserine modification is found at serine 37. Selenocysteine 52 is an active-site residue. Residue selenocysteine 52 is a non-standard amino acid, selenocysteine. Residues lysine 91, lysine 117, and lysine 151 each carry the N6-acetyllysine; alternate modification. Lysine 91, lysine 117, and lysine 151 each carry N6-succinyllysine; alternate. Phosphoserine occurs at positions 200 and 204.

The protein belongs to the glutathione peroxidase family. Homotetramer. Interacts with MIEN1. In terms of processing, during periods of oxidative stress, Sec-52 may react with a superoxide radical, irreversibly lose hydroselenide and be converted to dehydroalanine.

It is found in the cytoplasm. It localises to the mitochondrion. The catalysed reaction is 2 glutathione + H2O2 = glutathione disulfide + 2 H2O. It carries out the reaction a hydroperoxy polyunsaturated fatty acid + 2 glutathione = a hydroxy polyunsaturated fatty acid + glutathione disulfide + H2O. It catalyses the reaction tert-butyl hydroperoxide + 2 glutathione = tert-butanol + glutathione disulfide + H2O. The enzyme catalyses cumene hydroperoxide + 2 glutathione = 2-phenylpropan-2-ol + glutathione disulfide + H2O. The catalysed reaction is (13S)-hydroperoxy-(9Z,11E)-octadecadienoate + 2 glutathione = (13S)-hydroxy-(9Z,11E)-octadecadienoate + glutathione disulfide + H2O. It carries out the reaction (9S)-hydroperoxy-(10E,12Z)-octadecadienoate + 2 glutathione = (9S)-hydroxy-(10E,12Z)-octadecadienoate + glutathione disulfide + H2O. It catalyses the reaction (5S)-hydroperoxy-(6E,8Z,11Z,14Z)-eicosatetraenoate + 2 glutathione = (5S)-hydroxy-(6E,8Z,11Z,14Z)-eicosatetraenoate + glutathione disulfide + H2O. The enzyme catalyses (12S)-hydroperoxy-(5Z,8Z,10E,14Z)-eicosatetraenoate + 2 glutathione = (12S)-hydroxy-(5Z,8Z,10E,14Z)-eicosatetraenoate + glutathione disulfide + H2O. The catalysed reaction is (12R)-hydroperoxy-(5Z,8Z,10E,14Z)-eicosatetraenoate + 2 glutathione = (12R)-hydroxy-(5Z,8Z,10E,14Z)-eicosatetraenoate + glutathione disulfide + H2O. It carries out the reaction (15S)-hydroperoxy-(5Z,8Z,11Z,13E)-eicosatetraenoate + 2 glutathione = (15S)-hydroxy-(5Z,8Z,11Z,13E)-eicosatetraenoate + glutathione disulfide + H2O. It catalyses the reaction (5S)-hydroperoxy-(6E,8Z,11Z,14Z,17Z)-eicosapentaenoate + 2 glutathione = (5S)-hydroxy-(6E,8Z,11Z,14Z,17Z)-eicosapentaenoate + glutathione disulfide + H2O. The enzyme catalyses (12S)-hydroperoxy-(5Z,8Z,10E,14Z,17Z)-eicosapentaenoate + 2 glutathione = (12S)-hydroxy-(5Z,8Z,10E,14Z,17Z)-eicosapentaenoate + glutathione disulfide + H2O. The catalysed reaction is (15S)-hydroperoxy-(5Z,8Z,11Z,13E,17Z)-eicosapentaenoate + 2 glutathione = (15S)-hydroxy-(5Z,8Z,11Z,13E,17Z)-eicosapentaenoate + glutathione disulfide + H2O. It carries out the reaction (15S)-hydroperoxy-(11Z,13E)-eicosadienoate + 2 glutathione = (15S)-hydroxy-(11Z,13E)-eicosadienoate + glutathione disulfide + H2O. It catalyses the reaction (17S)-hydroperoxy-(4Z,7Z,10Z,13Z,15E,19Z)-docosahexaenoate + 2 glutathione = (17S)-hydroxy-(4Z,7Z,10Z,13Z,15E,19Z)-docosahexaenoate + glutathione disulfide + H2O. Functionally, catalyzes the reduction of hydroperoxides in a glutathione-dependent manner thus regulating cellular redox homeostasis. Can reduce small soluble hydroperoxides such as H2O2, cumene hydroperoxide and tert-butyl hydroperoxide, as well as several fatty acid-derived hydroperoxides. In platelets catalyzes the reduction of 12-hydroperoxyeicosatetraenoic acid, the primary product of the arachidonate 12-lipoxygenase pathway. In Sus scrofa (Pig), this protein is Glutathione peroxidase 1 (GPX1).